The primary structure comprises 481 residues: Small ribosomal subunit protein bS1 (481 aa).

4 consecutive S1 motif domains span residues 36–105 (GDIV…LSKK), 123–188 (DEAV…LSRR), 209–277 (GTIR…LSLK), and 294–363 (GQIV…LSLK). Residues 429-467 (TAQMEKFAAAEAAGRGADDQSSASSAPSEKTAGGSLASD) are disordered. Over residues 437 to 456 (AAEAAGRGADDQSSASSAPS) the composition is skewed to low complexity.

It belongs to the bacterial ribosomal protein bS1 family.

Binds mRNA; thus facilitating recognition of the initiation point. It is needed to translate mRNA with a short Shine-Dalgarno (SD) purine-rich sequence. The protein is Small ribosomal subunit protein bS1 (rpsA) of Mycobacterium tuberculosis (strain CDC 1551 / Oshkosh).